Here is a 278-residue protein sequence, read N- to C-terminus: uncharacterized protein (278 aa).

It localises to the cytoplasm. The protein localises to the nucleus. Probable methyltransferase. This is an uncharacterized protein from Schizosaccharomyces pombe (strain 972 / ATCC 24843) (Fission yeast).